The primary structure comprises 1004 residues: MCCTTVVVVRKPATERLKRPSVGRLGLFDPHAAENLALLGWYDYDCREHVDLLWSLSRAPDADAVLRPMVRLFENPATGWDELNAALLTDRGLRGRLFAVLGSSLALGDHLVAHPQSWKLLRGRVSLPSRTQLHQAFDECVSNFGDDPLDAPDSVLPRLRTLYCDQLLVLAALDLAATVEDEPVLPFTLVAAQLADIADAAMATALRVAEKIVCGDRTPPRLAVIAMGKWGARELNYVSDVDIIFVAEQADPLSTRVASEMMRVASEAFFQVDAGLRPEGRNGELVRTVESHIAYYQRWAKTWEFQALLKARSAVGDAELGERYLAALMPMVWAACERADFVAEVQAMRRRVEQLVPADVRGRELKLGSGGLRDVEFAVQLLQLVHGRSDESLHVVSTVDALAALGEGGYIGREDAANLTASYEFLRLLEHRLQLQRLKRTHLLPEDGDEEAVRWLARAAHIRPDGRHDAAGVLREELKNQNLRVSQLHAKLFYQPLLESIGPASLEIRHGMTSEAAERQLATLGYEGSQTALKHISALVNQSGRRGRVQSVLLPRLLNWMSYAPDPDGGLLAYRRLSEALSAETWYLSTLRDKPAVARRLMHVLGTSVYVPDLLMRAPEVIQSYGDGLAGPKLLEAEPAMVARALITSAGRHTDPIRAIDAARSLRRRELARVGSADLLGLLEVTEVCKALTSVWVAVLQAALDAVIRAYLPDGDKAPAAIAVIGMGRLGGAELGYGSDADVMFVCEPAIGVEDAQALRWSGMIAERVCRLLRTPSVDPPLDVDANLRPEGRNGPLVRTLGAYAAYYAQWAQPWEIQALLRAHAVAGDADLGQRFLLMADKMRYPPDGVSAEAVREIRRMKARVEAERLPRGADPHTHTKLGRGGLADIEWTVQLMQLRHAHELPALHKTSTLESLDAIAAANLIPEADVDLLRQAWLTATRARNALVLVRGKTTDQLPGPGRQLNAVAVAAGWPSDDGSEFLDNYLRVTRRAKTFVRKVFGS.

An adenylyl removase region spans residues M1–L497. The interval G502–S1004 is adenylyl transferase.

The protein belongs to the GlnE family. Requires Mg(2+) as cofactor.

The catalysed reaction is [glutamine synthetase]-O(4)-(5'-adenylyl)-L-tyrosine + phosphate = [glutamine synthetase]-L-tyrosine + ADP. The enzyme catalyses [glutamine synthetase]-L-tyrosine + ATP = [glutamine synthetase]-O(4)-(5'-adenylyl)-L-tyrosine + diphosphate. Involved in the regulation of glutamine synthetase GlnA, a key enzyme in the process to assimilate ammonia. When cellular nitrogen levels are high, the C-terminal adenylyl transferase (AT) inactivates GlnA by covalent transfer of an adenylyl group from ATP to specific tyrosine residue of GlnA, thus reducing its activity. Conversely, when nitrogen levels are low, the N-terminal adenylyl removase (AR) activates GlnA by removing the adenylyl group by phosphorolysis, increasing its activity. The regulatory region of GlnE binds the signal transduction protein PII (GlnB) which indicates the nitrogen status of the cell. The protein is Bifunctional glutamine synthetase adenylyltransferase/adenylyl-removing enzyme of Mycobacterium leprae (strain TN).